The following is a 93-amino-acid chain: Integration host factor subunit beta (93 aa).

This sequence belongs to the bacterial histone-like protein family. As to quaternary structure, heterodimer of an alpha and a beta chain.

Functionally, this protein is one of the two subunits of integration host factor, a specific DNA-binding protein that functions in genetic recombination as well as in transcriptional and translational control. This is Integration host factor subunit beta (ihfB) from Mannheimia haemolytica (Pasteurella haemolytica).